Reading from the N-terminus, the 191-residue chain is Cytochrome c biogenesis ATP-binding export protein CcmA (191 aa).

One can recognise an ABC transporter domain in the interval 2-190; the sequence is LSLHQLQFKN…SIKSAQILRI (189 aa). 29–36 is a binding site for ATP; it reads GANGCGKS.

It belongs to the ABC transporter superfamily. CcmA exporter (TC 3.A.1.107) family. The complex is composed of two ATP-binding proteins (CcmA) and two transmembrane proteins (CcmB).

The protein resides in the cell inner membrane. It catalyses the reaction heme b(in) + ATP + H2O = heme b(out) + ADP + phosphate + H(+). In terms of biological role, part of the ABC transporter complex CcmAB involved in the biogenesis of c-type cytochromes; once thought to export heme, this seems not to be the case, but its exact role is uncertain. Responsible for energy coupling to the transport system. The protein is Cytochrome c biogenesis ATP-binding export protein CcmA of Rickettsia conorii (strain ATCC VR-613 / Malish 7).